Consider the following 353-residue polypeptide: Photosystem II D2 protein (353 aa).

N-acetylthreonine is present on Thr-2. Residue Thr-2 is modified to Phosphothreonine. A helical transmembrane segment spans residues 41-61; the sequence is CAYFALGGWFTGTTFVTSWYT. His-118 contributes to the chlorophyll a binding site. Residues 125–141 form a helical membrane-spanning segment; it reads GFMLRQFELARSVQLRP. Residues Gln-130 and Asn-143 each contribute to the pheophytin a site. Residues 153–166 traverse the membrane as a helical segment; the sequence is VFVSVFLIYPLGQS. His-198 is a binding site for chlorophyll a. The helical transmembrane segment at 208–228 threads the bilayer; the sequence is AALLCAIHGATVENTLFEDGD. A plastoquinone contacts are provided by His-215 and Phe-262. Fe cation is bound at residue His-215. Residue His-269 participates in Fe cation binding. The chain crosses the membrane as a helical span at residues 279–295; it reads GLWMSAIGVVGLALNLR.

The protein belongs to the reaction center PufL/M/PsbA/D family. In terms of assembly, PSII is composed of 1 copy each of membrane proteins PsbA, PsbB, PsbC, PsbD, PsbE, PsbF, PsbH, PsbI, PsbJ, PsbK, PsbL, PsbM, PsbT, PsbX, PsbY, PsbZ, Psb30/Ycf12, at least 3 peripheral proteins of the oxygen-evolving complex and a large number of cofactors. It forms dimeric complexes. Requires The D1/D2 heterodimer binds P680, chlorophylls that are the primary electron donor of PSII, and subsequent electron acceptors. It shares a non-heme iron and each subunit binds pheophytin, quinone, additional chlorophylls, carotenoids and lipids. There is also a Cl(-1) ion associated with D1 and D2, which is required for oxygen evolution. The PSII complex binds additional chlorophylls, carotenoids and specific lipids. as cofactor.

Its subcellular location is the plastid. The protein localises to the chloroplast thylakoid membrane. It carries out the reaction 2 a plastoquinone + 4 hnu + 2 H2O = 2 a plastoquinol + O2. Its function is as follows. Photosystem II (PSII) is a light-driven water:plastoquinone oxidoreductase that uses light energy to abstract electrons from H(2)O, generating O(2) and a proton gradient subsequently used for ATP formation. It consists of a core antenna complex that captures photons, and an electron transfer chain that converts photonic excitation into a charge separation. The D1/D2 (PsbA/PsbD) reaction center heterodimer binds P680, the primary electron donor of PSII as well as several subsequent electron acceptors. D2 is needed for assembly of a stable PSII complex. The protein is Photosystem II D2 protein of Pinus thunbergii (Japanese black pine).